The primary structure comprises 638 residues: Threonine--tRNA ligase (638 aa).

Residues 1-61 (MPNITLPDGS…EADTPLAIVT (61 aa)) form the TGS domain. Residues 242-533 (DHRKLGRLLD…LIEHYAGALP (292 aa)) form a catalytic region. Residues Cys333, His384, and His510 each contribute to the Zn(2+) site.

This sequence belongs to the class-II aminoacyl-tRNA synthetase family. In terms of assembly, homodimer. Requires Zn(2+) as cofactor.

The protein resides in the cytoplasm. The catalysed reaction is tRNA(Thr) + L-threonine + ATP = L-threonyl-tRNA(Thr) + AMP + diphosphate + H(+). In terms of biological role, catalyzes the attachment of threonine to tRNA(Thr) in a two-step reaction: L-threonine is first activated by ATP to form Thr-AMP and then transferred to the acceptor end of tRNA(Thr). Also edits incorrectly charged L-seryl-tRNA(Thr). This is Threonine--tRNA ligase from Aromatoleum aromaticum (strain DSM 19018 / LMG 30748 / EbN1) (Azoarcus sp. (strain EbN1)).